The following is a 152-amino-acid chain: D-aminoacyl-tRNA deacylase (152 aa).

The short motif at glycine 142 to proline 143 is the Gly-cisPro motif, important for rejection of L-amino acids element.

The protein belongs to the DTD family. Homodimer.

The protein localises to the cytoplasm. It carries out the reaction glycyl-tRNA(Ala) + H2O = tRNA(Ala) + glycine + H(+). The enzyme catalyses a D-aminoacyl-tRNA + H2O = a tRNA + a D-alpha-amino acid + H(+). In terms of biological role, an aminoacyl-tRNA editing enzyme that deacylates mischarged D-aminoacyl-tRNAs. Also deacylates mischarged glycyl-tRNA(Ala), protecting cells against glycine mischarging by AlaRS. Acts via tRNA-based rather than protein-based catalysis; rejects L-amino acids rather than detecting D-amino acids in the active site. By recycling D-aminoacyl-tRNA to D-amino acids and free tRNA molecules, this enzyme counteracts the toxicity associated with the formation of D-aminoacyl-tRNA entities in vivo and helps enforce protein L-homochirality. The protein is D-aminoacyl-tRNA deacylase of Paraburkholderia xenovorans (strain LB400).